A 516-amino-acid polypeptide reads, in one-letter code: Pickpocket protein 11 (516 aa).

2 helical membrane-spanning segments follow: residues 117-137 (ILWWLLICNAVLLSFTLVIMS) and 454-474 (FIGTFGGITGLFMGCSFVSVF).

The protein belongs to the amiloride-sensitive sodium channel (TC 1.A.6) family. Expressed in embryonic and larval tracheal systems in the dorsal trunk and transverse connective (TC), but not in the junction between the dorsal trunk and TC, and in several tracheal branches and terminal cells. In larvae, also expressed in ventral pits. Expressed in the taste-sensing terminal organ of the larval head. In adult, expressed in hairs on the tibia, femur, tarsi of the leg and wing margin.

It localises to the membrane. Its function is as follows. Part of a complex that plays a role in tracheal liquid clearance. In both larvae and adults, contributes to the behavioral response to salt. Probable role in sodium transport. This is Pickpocket protein 11 (ppk11) from Drosophila melanogaster (Fruit fly).